Here is a 588-residue protein sequence, read N- to C-terminus: Disabled homolog 1 (588 aa).

Residues 1-26 (MSTETELQVAVKTSAKKDSRKKGQDR) form a disordered region. The segment covering 15–26 (AKKDSRKKGQDR) has biased composition (basic and acidic residues). The PID domain maps to 36-189 (KGEGVRYKAK…CEQAVYQTIL (154 aa)). Tyr198, Tyr220, and Tyr232 each carry phosphotyrosine. Disordered stretches follow at residues 417 to 443 (LTPL…RQKM), 451 to 470 (FQMA…PSLT), and 502 to 588 (LTPV…QAGS). Residues 424-436 (PGTSDSTRSSPQT) show a composition bias toward polar residues. Composition is skewed to low complexity over residues 503-512 (TPVTSTTPST) and 520-534 (PRQS…SHAS). Residue Ser524 is modified to Phosphoserine; by CDK5. Residues 537-546 (TTDDIFEEGF) show a composition bias toward acidic residues.

Associates with the SH2 domains of SRC, FYN and ABL. Interacts (phosphorylated on tyrosine residues) with CRK and CRKL (via respective SH2 domain). Interacts with SIAH1, LRP8 and VLDLR. Interacts with LRP1. Interacts with APLP1 (via NPXY motif). Interacts with DAB2IP. Interacts with ZSWIM8. In terms of processing, phosphorylated by FYN on Tyr-198 and Tyr-220 upon reelin induction in embryonic neurons. Also phosphorylated on Ser-524 independently of reelin signaling. Post-translationally, ubiquitinated by various cullin-5-RING E3 ubiquitin-protein ligase complexes (ECS complexes) following ligand-binding and phosphorylation, leading to its degradation. Ubiquitinated by the ECS(SOCS7) complex in the cortical plate of the developing cerebral cortex following ligand-binding and phosphorylation by FYN, leading to its degradation by the proteasome. Recognized by ZSWIM8 through a disorder targets misorder mechanism that eliminates misfolded DAB1 via ubiquitination and proteasomal degradation. In terms of tissue distribution, mainly expressed in brain.

It is found in the cytoplasm. In terms of biological role, signaling adapter of the reelin-mediated signaling pathway, which regulates the migration and differentiation of postmitotic neurons during brain development. Mediates intracellular transduction of Reelin signaling following reelin (RELN)-binding to its receptor: acts by docking proteins through its phosphotyrosine residues and PID domain. This Homo sapiens (Human) protein is Disabled homolog 1 (DAB1).